We begin with the raw amino-acid sequence, 298 residues long: Putative S-adenosyl-L-methionine-dependent methyltransferase MAV_0778 (298 aa).

S-adenosyl-L-methionine contacts are provided by residues Asp-124 and 153–154; that span reads DL.

This sequence belongs to the UPF0677 family.

Functionally, exhibits S-adenosyl-L-methionine-dependent methyltransferase activity. The chain is Putative S-adenosyl-L-methionine-dependent methyltransferase MAV_0778 from Mycobacterium avium (strain 104).